Reading from the N-terminus, the 375-residue chain is SAP-like protein BP-73 (375 aa).

3 disordered regions span residues 46–113 (PNNH…VPGE), 130–233 (RARG…VKFQ), and 257–315 (TLEN…PSLQ). Residues 59-70 (HQKGGSARRKSK) are compositionally biased toward basic residues. Over residues 76–86 (DDSENIDEFDT) the composition is skewed to acidic residues. Polar residues predominate over residues 88-109 (IMSSKNGPPISLTSNSRPQATS). 2 stretches are compositionally biased toward basic and acidic residues: residues 134–152 (KGKE…ERGS) and 163–186 (HSVD…KRSN). Over residues 187 to 197 (ESGNKQNSSIF) the composition is skewed to polar residues. A compositionally biased stretch (acidic residues) spans 295–311 (DEPDASDTDEPSGEYDE). The interval 338–375 (DLSTLKVTELRELAKSRGIKGYSKMKKNDLVELLSNMA) is interaction with WAXY.

As to quaternary structure, binds to the DNA in the promoter region of WAXY containing the sequence 5'-ACGCACGCTAACGTGA-3'. Expressed in tissues with high cell division activities: in root tips, stem node, panicle, flower and immature seed. Weakly expressed in root and leaf.

May regulate cell proliferation and plant growth. The sequence is that of SAP-like protein BP-73 (BP-73) from Oryza sativa subsp. japonica (Rice).